A 479-amino-acid chain; its full sequence is Transcription factor CP2-like protein 1 (479 aa).

The mediate transcriptional repression stretch occupies residues 1–52 (MLFWHTQPEHYNQHNSGSYLRDVLALPIFKQEEPQLSPENGARLPPLQYVLC). The region spanning 43–280 (RLPPLQYVLC…PSPSYNGSPN (238 aa)) is the Grh/CP2 DB domain. Disordered regions lie at residues 219–248 (KPKG…YQPS) and 260–301 (WPDV…LPLG). The span at 221 to 245 (KGADRKQKTDREKMEKRTAQEKEKY) shows a compositional bias: basic and acidic residues. The tract at residues 261–365 (PDVPYQANNT…IRLFNAIKGR (105 aa)) is SAM2-like domain. Residues 266 to 292 (QANNTPSPSYNGSPNSFGLREGNSSPN) are compositionally biased toward polar residues.

The protein belongs to the grh/CP2 family. CP2 subfamily. In terms of assembly, forms homohexamers via its SAM-like domain. Interacts with Mta1; which is indispensable for Tfcp2l1-mediated self-renewal-promoting effect and endoderm-inhibiting action. In terms of tissue distribution, highly expressed in placenta, testis, small intestine, kidney and stomach. Low levels of expression in lung, mesenteric lymph nodes, muscle, ovary, and thymus. No expression was detected in brain, heart, liver, and spleen. Expressed in eccrine glands in the palm. Expression is prominent in both kidney collecting ducts intercalated (IC) and principal (PC) cells. Also expressed in the thick limb of Henle and connecting segments of the nephron.

The protein resides in the nucleus. Functionally, transcription factor that facilitates establishment and maintenance of pluripotency in embryonic stem cells (ESCs). With Klf2, acts as the major effector of self-renewal that mediates induction of pluripotency downstream of LIF/Stat3 and Wnt/beta-catenin signaling. Required for normal duct development in the salivary gland and kidney. Coordinates the development of the kidney collecting ducts intercalated (IC) and principal (PC) cells, which regulate acid-base and salt-water homeostasis, respectively. Regulates the expression of IC genes including subunits B1 and D2 of the V-ATPase complex, Oxgr1, Ca12, Slc4a1, Aqp6 and IC-specific transcription factor Foxi1. Also regulates the expression of Jag1 and subsequent notch signaling in the collecting duct. Jag1 initiates notch signaling in PCs but inhibits notch signaling in ICs. Acts as a transcriptional suppressor that may suppress UBP1-mediated transcriptional activation. Modulates the placental expression of CYP11A1. The chain is Transcription factor CP2-like protein 1 (Tfcp2l1) from Mus musculus (Mouse).